We begin with the raw amino-acid sequence, 218 residues long: Capsid protein (218 aa).

The residue at position 1 (Met-1) is an N-acetylmethionine; by host. A compositionally biased stretch (low complexity) spans 1-10 (MDKSESTSAG). The segment at 1–29 (MDKSESTSAGRNRRRRLRRGSRSAPSSAD) is disordered. Over residues 11–21 (RNRRRRLRRGS) the composition is skewed to basic residues.

This sequence belongs to the cucumovirus capsid protein family.

The protein resides in the virion. Its function is as follows. Capsid protein. Probably binds RNA and plays a role in packaging. This is Capsid protein from Cucumis sativus (Cucumber).